The following is a 396-amino-acid chain: Phosphoglycerate kinase (396 aa).

Substrate contacts are provided by residues 21 to 23 (DLN), arginine 36, 59 to 62 (HLGR), arginine 113, and arginine 146. Residues lysine 197, glutamate 319, and 345 to 348 (GGDT) each bind ATP.

The protein belongs to the phosphoglycerate kinase family. In terms of assembly, monomer.

Its subcellular location is the cytoplasm. It carries out the reaction (2R)-3-phosphoglycerate + ATP = (2R)-3-phospho-glyceroyl phosphate + ADP. It functions in the pathway carbohydrate degradation; glycolysis; pyruvate from D-glyceraldehyde 3-phosphate: step 2/5. The protein is Phosphoglycerate kinase of Legionella pneumophila (strain Paris).